A 638-amino-acid chain; its full sequence is Chaperone protein HtpG (638 aa).

An a; substrate-binding region spans residues 1–343 (MTSTIDSDGA…SADLPLNISR (343 aa)). A b region spans residues 344-557 (EMIQESPILA…ESGPDRQLEK (214 aa)). A c region spans residues 558–638 (ILVGVGQLTG…VERGLRGSTA (81 aa)).

The protein belongs to the heat shock protein 90 family. As to quaternary structure, homodimer.

The protein resides in the cytoplasm. Molecular chaperone. Has ATPase activity. This Nitrobacter hamburgensis (strain DSM 10229 / NCIMB 13809 / X14) protein is Chaperone protein HtpG.